An 858-amino-acid polypeptide reads, in one-letter code: MAELSEEALLSVLPTIRVPKAGDRVHKDECAFSFDTPESEGGLYICMNTFLGFGKQYVERHFNKTGQRVYLHLRRTRRPKEEDPATGTGDPPRKKPTRLAIGVEGGFDLSEEKFELDEDVKIVILPDYLEIARDGLGGLPDIVRDRVTSAVEALLSADSASRKQEVQAWDGEVRQVSKHAFSLKQLDNPARIPPCGWKCSKCDMRENLWLNLTDGSILCGRRYFDGSGGNNHAVEHYRETGYPLAVKLGTITPDGADVYSYDEDDMVLDPSLAEHLSHFGIDMLKMQKTDKTMTELEIDMNQRIGEWELIQESGVPLKPLFGPGYTGIRNLGNSCYLNSVVQVLFSIPDFQRKYVDKLEKIFQNAPTDPTQDFSTQVAKLGHGLLSGEYSKPVPESGDGERVPEQKEVQDGIAPRMFKALIGKGHPEFSTNRQQDAQEFFLHLINMVERNCRSSENPNEVFRFLVEEKIKCLATEKVKYTQRVDYIMQLPVPMDAALNKEELLEYEEKKRQAEEEKMALPELVRAQVPFSSCLEAYGAPEQVDDFWSTALQAKSVAVKTTRFASFPDYLVIQIKKFTFGLDWVPKKLDVSIEMPEELDISQLRGTGLQPGEEELPDIAPPLVTPDEPKGSLGFYGNEDEDSFCSPHFSSPTSPMLDESVIIQLVEMGFPMDACRKAVYYTGNSGAEAAMNWVMSHMDDPDFANPLILPGSSGPGSTSAAADPPPEDCVTTIVSMGFSRDQALKALRATNNSLERAVDWIFSHIDDLDAEAAMDISEGRSAADSISESVPVGPKVRDGPGKYQLFAFISHMGTSTMCGHYVCHIKKEGRWVIYNDQKVCASEKPPKDLGYIYFYQRVAS.

Ala-2 bears the N-acetylalanine mark. Residues 74–96 (RRTRRPKEEDPATGTGDPPRKKP) are disordered. A Glycyl lysine isopeptide (Lys-Gly) (interchain with G-Cter in SUMO) cross-link involves residue Lys-113. Residues Ser-149 and Ser-156 each carry the phosphoserine modification. A UBP-type; degenerate zinc finger spans residues 175–283 (QVSKHAFSLK…EHLSHFGIDM (109 aa)). Residues Cys-195 and Cys-816 are joined by a disulfide bond. The Zn(2+) site is built by Cys-199 and Cys-202. Trp-209 serves as a coordination point for substrate. Cys-219 is a Zn(2+) binding site. 221–224 (RRYF) contributes to the substrate binding site. His-232 contacts Zn(2+). Substrate is bound by residues Tyr-259, Tyr-261, and Asp-264. Thr-292 carries the post-translational modification Phosphothreonine. A USP domain is found at 326–856 (TGIRNLGNSC…LGYIYFYQRV (531 aa)). Catalysis depends on Cys-335, which acts as the Nucleophile. Position 623 is a phosphothreonine (Thr-623). 2 consecutive UBA domains span residues 654-695 (MLDE…VMSH) and 722-762 (PPPE…IFSH). Ser-779, Ser-783, and Ser-785 each carry phosphoserine. Residue His-818 is the Proton acceptor of the active site.

It belongs to the peptidase C19 family. As to quaternary structure, homodimer. Interacts with TRIML1. Ubiquitinated by SMURF1; leading to proteasomal degradation. In terms of processing, SUMOylated at Lys-113; SUMOylation affects the interaction with Cav3.2 channels.

Its subcellular location is the cytoplasm. The protein localises to the stress granule. It is found in the nucleus. The enzyme catalyses Thiol-dependent hydrolysis of ester, thioester, amide, peptide and isopeptide bonds formed by the C-terminal Gly of ubiquitin (a 76-residue protein attached to proteins as an intracellular targeting signal).. Deubiquitinating enzyme that participates in a wide range of cellular processes by specifically cleaving isopeptide bonds between ubiquitin and substrate proteins or ubiquitin itself. Affects thereby important cellular signaling pathways such as NF-kappa-B, Wnt/beta-catenin, and cytokine production by regulating ubiquitin-dependent protein degradation. Participates in the activation of the Wnt signaling pathway by promoting FOXM1 deubiquitination and stabilization that induces the recruitment of beta-catenin to Wnt target gene promoter. Regulates the assembly and disassembly of heat-induced stress granules by mediating the hydrolysis of unanchored ubiquitin chains. Promotes lipopolysaccharide-induced apoptosis and inflammatory response by stabilizing the TXNIP protein. Affects T-cell biology by stabilizing the inhibitory receptor on T-cells PDC1. Acts as a negative regulator of autophagy by regulating ULK1 at both protein and mRNA levels. Acts also as a negative regulator of type I interferon production by simultaneously removing both 'Lys-48'-linked unanchored and 'Lys-63'-linked anchored polyubiquitin chains on the transcription factor IRF3. Modulates the stability of DNA mismatch repair protein MLH1 and counteracts the effect of the ubiquitin ligase UBR4. Upon activation by insulin, it gets phosphorylated through mTORC1-mediated phosphorylation to enhance YTHDF1 stability by removing 'Lys-11'-linked polyubiquitination. May also deubiquitinate other substrates such as the calcium channel CACNA1H. The protein is Ubiquitin carboxyl-terminal hydrolase 5 (USP5) of Homo sapiens (Human).